The chain runs to 64 residues: Conotoxin Pu5.2 (64 aa).

The N-terminal stretch at 1-22 (MRCVPVFVILLLLIASTPSVDA) is a signal peptide. Positions 23–52 (RPNPKDDVPLASFHGADNANRILRTLWNLR) are excised as a propeptide. Isoleucine 63 is modified (isoleucine amide).

Belongs to the conotoxin T superfamily. In terms of processing, contains 2 disulfide bonds that can be either 'C1-C3, C2-C4' or 'C1-C4, C2-C3', since these disulfide connectivities have been observed for conotoxins with cysteine framework V (for examples, see AC P0DQQ7 and AC P81755). As to expression, expressed by the venom duct.

The protein resides in the secreted. This Conus pulicarius (Flea-bitten cone) protein is Conotoxin Pu5.2.